Reading from the N-terminus, the 873-residue chain is Zinc finger X-linked protein ZXDB (873 aa).

Disordered regions lie at residues 1 to 23, 48 to 120, 138 to 184, 240 to 259, and 301 to 330; these read MEIPRLLPARGTPQGAGGGGCPA, RGAQ…GGSR, VETV…LSAV, EPGVAPFPQPQPPPQPGALI, and AEPAACPAPPEEEAEAPAAAAAQSPRGPAG. Gly residues-rich tracts occupy residues 14-23 and 85-120; these read QGAGGGGCPA and SGGGRGGGAGGGGGGSGGGGGGGGGGGGGGGGGGSR. Omega-N-methylarginine is present on Arg89. Residues 150 to 165 are compositionally biased toward basic and acidic residues; it reads VRREEAGAGPRPERRQ. Residues 240-255 are compositionally biased toward pro residues; it reads EPGVAPFPQPQPPPQP. Residues 316-327 show a composition bias toward low complexity; that stretch reads APAAAAAQSPRG. 10 consecutive C2H2-type zinc fingers follow at residues 340 to 364, 373 to 397, 403 to 427, 433 to 455, 462 to 486, 493 to 517, 523 to 547, 553 to 577, 583 to 607, and 616 to 641; these read YLCPEAQCGQTFAKKHQLKVHLLTH, FKCPLSGCGWTFTTSYKLKRHLQSH, FGCPVQGCGKSFTTVYNLKAHMKGH, FKCEVCEESFPTQAKLSTHQRSH, YQCAFSGCKKTFITVSALFSHNRAH, FACSFPGCSKQYDKACRLKIHLRSH, FLCDFDGCGWNFTSMSKLLRHKRKH, FTCPVEGCGKSFTRAEHLKGHSITH, FVCPVEGCCARFSARSSLYIHSKKH, and SRCPVPTCNKLFTSKHSMKTHMTKRH. Positions 340–646 are required for interaction with ZXDC; it reads YLCPEAQCGQ…MTKRHNLSQD (307 aa). Residues 645–776 form a required for transcriptional activation region; that stretch reads QDLLAQLEAA…DMDDVSAGNV (132 aa).

It belongs to the ZXD family. In terms of assembly, self-associates. Interacts with ZXDC and CIITA.

It is found in the nucleus. In terms of biological role, cooperates with CIITA to promote transcription of MHC class I and MHC class II genes. The protein is Zinc finger X-linked protein ZXDB (Zxdb) of Mus musculus (Mouse).